The chain runs to 115 residues: Chaperone protein PrsD (115 aa).

This sequence belongs to the periplasmic pilus chaperone family.

The protein resides in the periplasm. Mediates assembly of pili by forming soluble multimeric complexes with pili subunits as an intermediate step in the assembly process. This chain is Chaperone protein PrsD (prsD), found in Escherichia coli.